Consider the following 302-residue polypeptide: Sulfate adenylyltransferase subunit 2 (302 aa).

This sequence belongs to the PAPS reductase family. CysD subfamily. As to quaternary structure, heterodimer composed of CysD, the smaller subunit, and CysN.

It carries out the reaction sulfate + ATP + H(+) = adenosine 5'-phosphosulfate + diphosphate. The protein operates within sulfur metabolism; hydrogen sulfide biosynthesis; sulfite from sulfate: step 1/3. With CysN forms the ATP sulfurylase (ATPS) that catalyzes the adenylation of sulfate producing adenosine 5'-phosphosulfate (APS) and diphosphate, the first enzymatic step in sulfur assimilation pathway. APS synthesis involves the formation of a high-energy phosphoric-sulfuric acid anhydride bond driven by GTP hydrolysis by CysN coupled to ATP hydrolysis by CysD. The protein is Sulfate adenylyltransferase subunit 2 of Baumannia cicadellinicola subsp. Homalodisca coagulata.